Reading from the N-terminus, the 161-residue chain is uncharacterized protein (161 aa).

This is an uncharacterized protein from Lepidoptera (butterflies and moths).